Consider the following 365-residue polypeptide: Dihydroorotate dehydrogenase (quinone) (365 aa).

FMN is bound by residues 61–65 (AGFDK) and S85. A substrate-binding site is contributed by K65. A substrate-binding site is contributed by 110–114 (NRMGF). Positions 139 and 170 each coordinate FMN. N170 serves as a coordination point for substrate. S173 serves as the catalytic Nucleophile. N175 lines the substrate pocket. 2 residues coordinate FMN: K214 and S242. 243-244 (NT) is a substrate binding site. Residues G266, G295, and 316-317 (YS) contribute to the FMN site.

Belongs to the dihydroorotate dehydrogenase family. Type 2 subfamily. In terms of assembly, monomer. Requires FMN as cofactor.

It is found in the cell membrane. The catalysed reaction is (S)-dihydroorotate + a quinone = orotate + a quinol. The protein operates within pyrimidine metabolism; UMP biosynthesis via de novo pathway; orotate from (S)-dihydroorotate (quinone route): step 1/1. Its function is as follows. Catalyzes the conversion of dihydroorotate to orotate with quinone as electron acceptor. The protein is Dihydroorotate dehydrogenase (quinone) of Bradyrhizobium diazoefficiens (strain JCM 10833 / BCRC 13528 / IAM 13628 / NBRC 14792 / USDA 110).